We begin with the raw amino-acid sequence, 653 residues long: Fidgetin-like protein 2 (653 aa).

3 disordered regions span residues 1-36, 86-129, and 216-240; these read MHWTPEHAQPLNQWPEQHLDVSSTTPSPAHKLELPP, ASFL…SGAL, and YGALPPPPGPPPAPYLTPGLPAPTP. Polar residues predominate over residues 10–27; the sequence is PLNQWPEQHLDVSSTTPS. The span at 97 to 107 shows a compositional bias: pro residues; sequence EPWPGPEPPYP. The segment covering 119–129 has biased composition (gly residues); that stretch reads KSGGGGGSGAL. Residues 219–240 are compositionally biased toward pro residues; it reads LPPPPGPPPAPYLTPGLPAPTP. Residues Ala-395 and 435–440 contribute to the ATP site; that span reads GAGKAL.

It belongs to the AAA ATPase family. Mg(2+) is required as a cofactor.

The protein localises to the cytoplasm. The protein resides in the cell cortex. The enzyme catalyses ATP + H2O = ADP + phosphate + H(+). Microtubule-severing enzyme that negatively regulates cell migration and wound healing. In migrating cells, targets dynamic microtubules (MTs) at the leading edge and severs them, thereby suppressing motility. Microtubule severing releases ARHGEF2 which activates RHOA, which in turn regulates focal ahesion turnover via focal adhesion kinase, as opposed to F-actin polymerization, to suppress cell motility. Negative regulator of axon regeneration that suppresses axonal growth by selectively severing dynamic MTs in the distal axon shaft and growth cone. Contributes to proper cell branching during endothelial and neuronal development. The protein is Fidgetin-like protein 2 of Homo sapiens (Human).